A 117-amino-acid chain; its full sequence is UPF0102 protein Rsph17025_0472 (117 aa).

This sequence belongs to the UPF0102 family.

The chain is UPF0102 protein Rsph17025_0472 from Cereibacter sphaeroides (strain ATCC 17025 / ATH 2.4.3) (Rhodobacter sphaeroides).